Consider the following 136-residue polypeptide: Large ribosomal subunit protein uL16 (136 aa).

It belongs to the universal ribosomal protein uL16 family. In terms of assembly, part of the 50S ribosomal subunit.

Functionally, binds 23S rRNA and is also seen to make contacts with the A and possibly P site tRNAs. In Pseudoalteromonas atlantica (strain T6c / ATCC BAA-1087), this protein is Large ribosomal subunit protein uL16.